The following is a 313-amino-acid chain: T-box protein 37 (313 aa).

Positions 19-195 (IWEKFYPKTE…HNKFASGFRS (177 aa)) form a DNA-binding region, T-box. A disordered region spans residues 193-228 (FRSNGKRRLSSESENSENSPPKRSASAISSLTPPAI).

It is found in the nucleus. In terms of biological role, transcription factor. Required for mesodermal induction, acting redundantly with transcription factor tbx-38. Together with tbx-38, acts by inducing cell fates in the AB lineage, thereby playing a role in development of the anterior pharynx. This is T-box protein 37 (tbx-37) from Caenorhabditis elegans.